Consider the following 444-residue polypeptide: uncharacterized protein (444 aa).

A run of 14 helical transmembrane segments spans residues 9–29 (LIVS…MIAV), 42–62 (IASI…TQPI), 82–102 (LFLI…LIVF), 104–126 (ALQA…HVVS), 136–156 (FFGL…SILI), 164–184 (IFWV…TMFP), 193–213 (APLD…IILL), 217–237 (EAPW…PLFF), 263–283 (LSVL…PLFM), 295–315 (GMAL…GAQL), 324–344 (IIFL…LLSS), 347–367 (SVLF…VGLT), 387–407 (GIFS…IGLI), and 411–431 (HTLF…SLGI).

The protein belongs to the major facilitator superfamily. TCR/Tet family.

It is found in the cell membrane. This is an uncharacterized protein from Bacillus subtilis (strain 168).